A 487-amino-acid polypeptide reads, in one-letter code: Serine/threonine-protein kinase BSK7 (487 aa).

Residue Gly-2 is the site of N-myristoyl glycine attachment. Residues 59 to 325 form the Protein kinase domain; it reads ENIVSEHGEK…DLETPSHQLM (267 aa). ATP-binding positions include 65-73 and Lys-87; that span reads HGEKAPNVV. Asp-181 functions as the Proton acceptor in the catalytic mechanism.

Belongs to the protein kinase superfamily. Ser/Thr protein kinase family.

It localises to the cell membrane. It catalyses the reaction L-seryl-[protein] + ATP = O-phospho-L-seryl-[protein] + ADP + H(+). It carries out the reaction L-threonyl-[protein] + ATP = O-phospho-L-threonyl-[protein] + ADP + H(+). Probable serine/threonine kinase that acts as a positive regulator of brassinosteroid (BR) signaling downstream of the receptor kinase BRI1. Functions redundantly with BSK3, BSK5, BSK6 and BSK8. This chain is Serine/threonine-protein kinase BSK7, found in Arabidopsis thaliana (Mouse-ear cress).